The sequence spans 285 residues: Ribosomal RNA small subunit methyltransferase I (285 aa).

This sequence belongs to the methyltransferase superfamily. RsmI family.

The protein resides in the cytoplasm. It catalyses the reaction cytidine(1402) in 16S rRNA + S-adenosyl-L-methionine = 2'-O-methylcytidine(1402) in 16S rRNA + S-adenosyl-L-homocysteine + H(+). Its function is as follows. Catalyzes the 2'-O-methylation of the ribose of cytidine 1402 (C1402) in 16S rRNA. The chain is Ribosomal RNA small subunit methyltransferase I from Mycobacterium tuberculosis (strain ATCC 25618 / H37Rv).